The primary structure comprises 98 residues: NADH-ubiquinone oxidoreductase chain 4L (98 aa).

Transmembrane regions (helical) follow at residues 1–21 (MTPVHFSFTSAFILGLMGLAF), 29–49 (ALLCLEGMMLSLFIALSLWAL), and 58–78 (VAPMLLLAFSACEASAGLALL).

The protein belongs to the complex I subunit 4L family.

It localises to the mitochondrion membrane. It catalyses the reaction a ubiquinone + NADH + 5 H(+)(in) = a ubiquinol + NAD(+) + 4 H(+)(out). Its function is as follows. Core subunit of the mitochondrial membrane respiratory chain NADH dehydrogenase (Complex I) which catalyzes electron transfer from NADH through the respiratory chain, using ubiquinone as an electron acceptor. Part of the enzyme membrane arm which is embedded in the lipid bilayer and involved in proton translocation. This is NADH-ubiquinone oxidoreductase chain 4L (MT-ND4L) from Oncorhynchus clarkii (Cutthroat trout).